A 204-amino-acid polypeptide reads, in one-letter code: Ribosome maturation factor RimP (204 aa).

The tract at residues 177–204 is disordered; it reads NFDESQFDEIQETEGEEADEAETPITRH. The segment covering 181 to 198 has biased composition (acidic residues); that stretch reads SQFDEIQETEGEEADEAE.

The protein belongs to the RimP family.

Its subcellular location is the cytoplasm. Required for maturation of 30S ribosomal subunits. The protein is Ribosome maturation factor RimP of Cereibacter sphaeroides (strain ATCC 17025 / ATH 2.4.3) (Rhodobacter sphaeroides).